Consider the following 203-residue polypeptide: uncharacterized protein (203 aa).

This sequence belongs to the mimivirus L332/L333/L334 family.

This is an uncharacterized protein from Acanthamoeba polyphaga mimivirus (APMV).